The following is a 154-amino-acid chain: Ribonuclease H (154 aa).

The RNase H type-1 domain maps to 1–141 (MKRIEAYTDG…ADELAREGME (141 aa)). Residues Asp9, Glu47, Asp69, and Asp133 each contribute to the Mg(2+) site.

Belongs to the RNase H family. In terms of assembly, monomer. Requires Mg(2+) as cofactor.

Its subcellular location is the cytoplasm. It catalyses the reaction Endonucleolytic cleavage to 5'-phosphomonoester.. Its function is as follows. Endonuclease that specifically degrades the RNA of RNA-DNA hybrids. The polypeptide is Ribonuclease H (Brucella anthropi (strain ATCC 49188 / DSM 6882 / CCUG 24695 / JCM 21032 / LMG 3331 / NBRC 15819 / NCTC 12168 / Alc 37) (Ochrobactrum anthropi)).